A 371-amino-acid chain; its full sequence is tRNA-specific 2-thiouridylase MnmA (371 aa).

ATP-binding positions include 13-20 and Met-39; that span reads GMSGGVDS. The segment at 99-101 is interaction with target base in tRNA; the sequence is NPD. The active-site Nucleophile is the Cys-104. Cys-104 and Cys-200 form a disulfide bridge. Gly-128 provides a ligand contact to ATP. The tract at residues 150–152 is interaction with tRNA; it reads KDQ. Cys-200 serves as the catalytic Cysteine persulfide intermediate. The segment at 308 to 309 is interaction with tRNA; that stretch reads RY.

This sequence belongs to the MnmA/TRMU family.

The protein resides in the cytoplasm. The catalysed reaction is S-sulfanyl-L-cysteinyl-[protein] + uridine(34) in tRNA + AH2 + ATP = 2-thiouridine(34) in tRNA + L-cysteinyl-[protein] + A + AMP + diphosphate + H(+). Its function is as follows. Catalyzes the 2-thiolation of uridine at the wobble position (U34) of tRNA, leading to the formation of s(2)U34. The sequence is that of tRNA-specific 2-thiouridylase MnmA from Listeria monocytogenes serovar 1/2a (strain ATCC BAA-679 / EGD-e).